Consider the following 398-residue polypeptide: tRNA-specific 2-thiouridylase MnmA (398 aa).

Residues 20–27 and Leu46 each bind ATP; that span reads AMSGGVDS. The Nucleophile role is filled by Cys114. Cys114 and Cys210 are joined by a disulfide. ATP is bound at residue Gly138. Residues 160 to 162 are interaction with tRNA; the sequence is RDQ. The Cysteine persulfide intermediate role is filled by Cys210.

This sequence belongs to the MnmA/TRMU family.

The protein resides in the cytoplasm. It carries out the reaction S-sulfanyl-L-cysteinyl-[protein] + uridine(34) in tRNA + AH2 + ATP = 2-thiouridine(34) in tRNA + L-cysteinyl-[protein] + A + AMP + diphosphate + H(+). Its function is as follows. Catalyzes the 2-thiolation of uridine at the wobble position (U34) of tRNA, leading to the formation of s(2)U34. This Brucella abortus (strain S19) protein is tRNA-specific 2-thiouridylase MnmA.